A 284-amino-acid chain; its full sequence is Sulfotransferase 2A1 (284 aa).

3'-phosphoadenylyl sulfate contacts are provided by K43, S44, G45, T46, N47, and W48. H98 serves as the catalytic Proton acceptor. 3'-phosphoadenylyl sulfate-binding residues include R120, S128, Y183, S217, M222, R246, K247, and G248.

Belongs to the sulfotransferase 1 family. As to quaternary structure, homodimer.

It is found in the cytoplasm. The catalysed reaction is an alcohol + 3'-phosphoadenylyl sulfate = an alkyl sulfate + adenosine 3',5'-bisphosphate + H(+). It catalyses the reaction taurolithocholate + 3'-phosphoadenylyl sulfate = taurolithocholate 3-sulfate + adenosine 3',5'-bisphosphate + H(+). The enzyme catalyses lithocholate + 3'-phosphoadenylyl sulfate = lithocholate sulfate + adenosine 3',5'-bisphosphate + H(+). It carries out the reaction (24S)-hydroxycholesterol + 3'-phosphoadenylyl sulfate = (24S)-hydroxycholesterol 24-sulfate + adenosine 3',5'-bisphosphate + H(+). The catalysed reaction is (24S)-hydroxycholesterol + 3'-phosphoadenylyl sulfate = (24S)-hydroxycholesterol 3-sulfate + adenosine 3',5'-bisphosphate + H(+). It catalyses the reaction (24S)-hydroxycholesterol 24-sulfate + 3'-phosphoadenylyl sulfate = (24S)-hydroxycholesterol 3,24-disulfate + adenosine 3',5'-bisphosphate + H(+). The enzyme catalyses 3beta-hydroxyandrost-5-en-17-one + 3'-phosphoadenylyl sulfate = dehydroepiandrosterone 3-sulfate + adenosine 3',5'-bisphosphate + H(+). It carries out the reaction pregnenolone + 3'-phosphoadenylyl sulfate = pregnenolone sulfate + adenosine 3',5'-bisphosphate + H(+). The catalysed reaction is androsterone + 3'-phosphoadenylyl sulfate = androsterone 3alpha-sulfate + adenosine 3',5'-bisphosphate + H(+). Functionally, sulfotransferase that utilizes 3'-phospho-5'-adenylyl sulfate (PAPS) as sulfonate donor to catalyze the sulfonation of steroids and bile acids in the liver and adrenal glands. Mediates the sulfation of a wide range of steroids and sterols, including pregnenolone, androsterone, DHEA, bile acids, cholesterol and as well many xenobiotics that contain alcohol and phenol functional groups. Sulfonation increases the water solubility of most compounds, and therefore their renal excretion, but it can also result in bioactivation to form active metabolites. Plays an important role in maintening steroid and lipid homeostasis. Plays a key role in bile acid metabolism. In addition, catalyzes the metabolic activation of potent carcinogenic polycyclic arylmethanols. This chain is Sulfotransferase 2A1 (Sult2a1), found in Rattus norvegicus (Rat).